The following is an 897-amino-acid chain: Protein translocase subunit SecA (897 aa).

Residues Gln89, 107–111 (GEGKT), and Asp517 each bind ATP. The segment covering 839–856 (DDAQATHSNPNEQTKQAS) has biased composition (polar residues). The segment at 839-897 (DDAQATHSNPNEQTKQASITNNIQTQTDQQNTYQRKEKKVGRNEPCPCGSGKKYKKCHG) is disordered. Low complexity predominate over residues 857-870 (ITNNIQTQTDQQNT). The Zn(2+) site is built by Cys884, Cys886, Cys895, and His896.

This sequence belongs to the SecA family. Monomer and homodimer. Part of the essential Sec protein translocation apparatus which comprises SecA, SecYEG and auxiliary proteins SecDF-YajC and YidC. Zn(2+) serves as cofactor.

The protein localises to the cell inner membrane. Its subcellular location is the cytoplasm. It carries out the reaction ATP + H2O + cellular proteinSide 1 = ADP + phosphate + cellular proteinSide 2.. In terms of biological role, part of the Sec protein translocase complex. Interacts with the SecYEG preprotein conducting channel. Has a central role in coupling the hydrolysis of ATP to the transfer of proteins into and across the cell membrane, serving as an ATP-driven molecular motor driving the stepwise translocation of polypeptide chains across the membrane. This Vesicomyosocius okutanii subsp. Calyptogena okutanii (strain HA) protein is Protein translocase subunit SecA.